A 242-amino-acid chain; its full sequence is uncharacterized protein (242 aa).

This is an uncharacterized protein from Agrobacterium vitis (Rhizobium vitis).